The primary structure comprises 179 residues: Large ribosomal subunit protein uL6 (179 aa).

Belongs to the universal ribosomal protein uL6 family. Part of the 50S ribosomal subunit.

Its function is as follows. This protein binds to the 23S rRNA, and is important in its secondary structure. It is located near the subunit interface in the base of the L7/L12 stalk, and near the tRNA binding site of the peptidyltransferase center. The chain is Large ribosomal subunit protein uL6 from Acidothermus cellulolyticus (strain ATCC 43068 / DSM 8971 / 11B).